The chain runs to 395 residues: ATP phosphoribosyltransferase regulatory subunit (395 aa).

It belongs to the class-II aminoacyl-tRNA synthetase family. HisZ subfamily. In terms of assembly, heteromultimer composed of HisG and HisZ subunits.

It localises to the cytoplasm. It functions in the pathway amino-acid biosynthesis; L-histidine biosynthesis; L-histidine from 5-phospho-alpha-D-ribose 1-diphosphate: step 1/9. Required for the first step of histidine biosynthesis. May allow the feedback regulation of ATP phosphoribosyltransferase activity by histidine. This is ATP phosphoribosyltransferase regulatory subunit from Stutzerimonas stutzeri (Pseudomonas stutzeri).